We begin with the raw amino-acid sequence, 272 residues long: HMP-PP phosphatase (272 aa).

The active-site Nucleophile is the Asp8. The Mg(2+) site is built by Asp8, Asp10, and Asp212.

It belongs to the HAD-like hydrolase superfamily. Cof family. It depends on Mg(2+) as a cofactor.

It catalyses the reaction 4-amino-2-methyl-5-(diphosphooxymethyl)pyrimidine + H2O = 4-amino-2-methyl-5-(phosphooxymethyl)pyrimidine + phosphate + H(+). Functionally, catalyzes the hydrolysis of 4-amino-2-methyl-5-hydroxymethylpyrimidine pyrophosphate (HMP-PP) to 4-amino-2-methyl-5-hydroxymethylpyrimidine phosphate (HMP-P). The chain is HMP-PP phosphatase from Klebsiella pneumoniae (strain 342).